We begin with the raw amino-acid sequence, 140 residues long: MSMKYLMLLFAAMIIRSFADSGNAIETTLPEITNATTDIPAIRLCGPEGDGYCLHGDCIHARDIDGMYCRCSHGYTGIRCQHVVLVDYQRSENPNTTTSYIPSPGIVLVLVGIIIITCCSLSVYRFTRRTKLPIQDMVVP.

The signal sequence occupies residues 1-18; that stretch reads MSMKYLMLLFAAMIIRSF. At 19 to 100 the chain is on the extracellular side; sequence ADSGNAIETT…SENPNTTTSY (82 aa). An N-linked (GlcNAc...) asparagine; by host glycan is attached at N34. The EGF-like domain maps to 41–81; that stretch reads AIRLCGPEGDGYCLHGDCIHARDIDGMYCRCSHGYTGIRCQ. 3 cysteine pairs are disulfide-bonded: C45-C58, C53-C69, and C71-C80. The N-linked (GlcNAc...) asparagine; by host glycan is linked to N95. Residues 101 to 121 form a helical membrane-spanning segment; it reads IPSPGIVLVLVGIIIITCCSL. Topologically, residues 122–140 are cytoplasmic; sequence SVYRFTRRTKLPIQDMVVP.

The protein belongs to the orthopoxvirus OPG019 family. In terms of assembly, vaccinia growth factor interacts with host EGFR and promotes EGFR dimerization.

Its subcellular location is the host membrane. It is found in the secreted. Stimulates cellular proliferation (hyperplasia)and mobility around infected cells to promote rapid and efficient spread of infection. This effect is beneficial for virus replication in vivo, because poxviruses replicate possibly better in proliferating cells than in quiescent cells. Acts by binding host EGFR, inducing its dimerization, autophosphorylation and leading to activation of several cellular pathways regulating cell proliferation or cell survival. The activation by host EGFR of mitogen activated protein kinases (MAPK) and extracellular-signal regulated kinases (ERK) are essential for the positive effect of vaccinia growth factor on poxvirus virulence in vivo. This chain is Pro-vaccinia growth factor (OPG019), found in Vaccinia virus (strain L-IVP) (VACV).